Here is a 705-residue protein sequence, read N- to C-terminus: Elongation factor G (705 aa).

Residues 7–287 (HLTRNIGIMA…YVCAFLPSPL (281 aa)) enclose the tr-type G domain. Residues 16 to 23 (AHIDAGKT), 84 to 88 (DTPGH), and 138 to 141 (NKMD) each bind GTP.

This sequence belongs to the TRAFAC class translation factor GTPase superfamily. Classic translation factor GTPase family. EF-G/EF-2 subfamily.

The protein localises to the cytoplasm. In terms of biological role, catalyzes the GTP-dependent ribosomal translocation step during translation elongation. During this step, the ribosome changes from the pre-translocational (PRE) to the post-translocational (POST) state as the newly formed A-site-bound peptidyl-tRNA and P-site-bound deacylated tRNA move to the P and E sites, respectively. Catalyzes the coordinated movement of the two tRNA molecules, the mRNA and conformational changes in the ribosome. The sequence is that of Elongation factor G from Bacteroides thetaiotaomicron (strain ATCC 29148 / DSM 2079 / JCM 5827 / CCUG 10774 / NCTC 10582 / VPI-5482 / E50).